The sequence spans 164 residues: S-ribosylhomocysteine lyase (164 aa).

The Fe cation site is built by His-61, His-65, and Cys-131.

It belongs to the LuxS family. In terms of assembly, homodimer. Fe cation serves as cofactor.

It catalyses the reaction S-(5-deoxy-D-ribos-5-yl)-L-homocysteine = (S)-4,5-dihydroxypentane-2,3-dione + L-homocysteine. In terms of biological role, involved in the synthesis of autoinducer 2 (AI-2) which is secreted by bacteria and is used to communicate both the cell density and the metabolic potential of the environment. The regulation of gene expression in response to changes in cell density is called quorum sensing. Catalyzes the transformation of S-ribosylhomocysteine (RHC) to homocysteine (HC) and 4,5-dihydroxy-2,3-pentadione (DPD). The polypeptide is S-ribosylhomocysteine lyase (Bifidobacterium longum (strain NCC 2705)).